A 273-amino-acid polypeptide reads, in one-letter code: tRNA (guanine-N(7)-)-methyltransferase (273 aa).

S-adenosyl-L-methionine-binding residues include G86, E109, R111, N142, A143, and L162. D165 is an active-site residue. An alphaC helix region spans residues 166–174; sequence PHFKKTKHK. S-adenosyl-L-methionine-binding residues include T240 and E242. Residues 240–248 are alpha6 helix; sequence TEEGKKVQR.

It belongs to the class I-like SAM-binding methyltransferase superfamily. TrmB family. Catalytic component of the METTL1-WDR4 complex, composed of mettl1 and wdr4.

It localises to the nucleus. It catalyses the reaction guanosine(46) in tRNA + S-adenosyl-L-methionine = N(7)-methylguanosine(46) in tRNA + S-adenosyl-L-homocysteine. The enzyme catalyses a guanosine in mRNA + S-adenosyl-L-methionine = an N(7)-methylguanosine in mRNA + S-adenosyl-L-homocysteine. It carries out the reaction a guanosine in miRNA + S-adenosyl-L-methionine = an N(7)-methylguanosine in miRNA + S-adenosyl-L-homocysteine. Its pathway is tRNA modification; N(7)-methylguanine-tRNA biosynthesis. Functionally, catalytic component of METTL1-WDR4 methyltransferase complex that mediates the formation of N(7)-methylguanine in a subset of RNA species, such as tRNAs, mRNAs and microRNAs (miRNAs). Catalyzes the formation of N(7)-methylguanine at position 46 (m7G46) in a large subset of tRNAs that contain the 5'-RAGGU-3' motif within the variable loop. M7G46 interacts with C13-G22 in the D-loop to stabilize tRNA tertiary structure and protect tRNAs from decay. Also acts as a methyltransferase for a subset of internal N(7)-methylguanine in mRNAs. Internal N(7)-methylguanine methylation of mRNAs in response to stress promotes their relocalization to stress granules, thereby suppressing their translation. Also methylates a specific subset of miRNAs. This Xenopus laevis (African clawed frog) protein is tRNA (guanine-N(7)-)-methyltransferase (mettl1).